A 904-amino-acid chain; its full sequence is MPVRKQDTQRALHLLEEYRSKLSQTEDRQLRSSIERVINIFQSNLFQALIDIQEFYEVTLLDNPKCIDRSKPSEPIQPVNTWEISSLPSSTVTSETLPSSLSPSVEKYRYQDEDTPPQEHISPQITNEVIGPELVHVSEKNLSEIENVHGFVSHSHISPIKPTEAVLPSPPTVPVIPVLPVPAENTVILPTIPQANPPPVLVNTDSLETPTYVNGTDADYEYEEITLERGNSGLGFSIAGGTDNPHIGDDSSIFITKIITGGAAAQDGRLRVNDCILRVNEVDVRDVTHSKAVEALKEAGSIVRLYVKRRKPVSEKIMEIKLIKGPKGLGFSIAGGVGNQHIPGDNSIYVTKIIEGGAAHKDGKLQIGDKLLAVNNVCLEEVTHEEAVTALKNTSDFVYLKVAKPTSMYMNDGYAPPDITNSSSQPVDNHVSPSSFLGQTPASPARYSPVSKAVLGDDEITREPRKVVLHRGSTGLGFNIVGGEDGEGIFISFILAGGPADLSGELRKGDRIISVNSVDLRAASHEQAAAALKNAGQAVTIVAQYRPEEYSRFEAKIHDLREQMMNSSISSGSGSLRTSQKRSLYVRALFDYDKTKDSGLPSQGLNFKFGDILHVINASDDEWWQARQVTPDGESDEVGVIPSKRRVEKKERARLKTVKFNSKTRDKGEIPDDMGSKGLKHVTSNASDSESSYRGQEEYVLSYEPVNQQEVNYTRPVIILGPMKDRINDDLISEFPDKFGSCVPHTTRPKRDYEVDGRDYHFVTSREQMEKDIQEHKFIEAGQYNNHLYGTSVQSVREVAEKGKHCILDVSGNAIKRLQIAQLYPISIFIKPKSMENIMEMNKRLTEEQARKTFERAMKLEQEFTEHFTAIVQGDTLEDIYNQVKQIIEEQSGSYIWVPAKEKL.

Residues 4-64 (RKQDTQRALH…FYEVTLLDNP (61 aa)) enclose the L27 domain. Threonine 115 is subject to Phosphothreonine. Serine 122, serine 138, and serine 158 each carry phosphoserine. The segment at 162–212 (PTEAVLPSPPTVPVIPVLPVPAENTVILPTIPQANPPPVLVNTDSLETPTY) is interaction with SH3 domains. PDZ domains follow at residues 224–310 (EITL…VKRR), 319–405 (EIKL…VAKP), and 466–546 (KVVL…AQYR). A required for interaction with MARCHF2 region spans residues 224–546 (EITLERGNSG…QAVTIVAQYR (323 aa)). Serine 232 carries the post-translational modification Phosphoserine. Phosphotyrosine is present on tyrosine 399. Phosphoserine is present on residues serine 568, serine 573, serine 575, serine 579, serine 598, serine 619, serine 676, serine 684, serine 687, glutamine 709, and serine 834. An SH3 domain is found at 581 to 651 (KRSLYVRALF…PSKRRVEKKE (71 aa)). Residues 662-693 (SKTRDKGEIPDDMGSKGLKHVTSNASDSESSY) form a disordered region. Positions 682–693 (VTSNASDSESSY) are enriched in polar residues. A Guanylate kinase-like domain is found at 714-889 (TRPVIILGPM…IYNQVKQIIE (176 aa)).

This sequence belongs to the MAGUK family. In terms of assembly, homotetramer. Interacts (via guanylate kinase-like domain) with DLGAP1, DLGAP2, DLGAP3, DLGAP4 and MAP1A. Interacts (via guanylate kinase-like domain) with KIF13B. May interact with HTR2A. Interacts (via PDZ domains) with GRIA1. Interacts (via PDZ domains) with GRIN2A. Interacts (via PDZ domains) with KCND2 and KCND3. Interacts (via PDZ domains) with KCNA1, KCNA2, KCNA3 and KCNA4. Interacts (via PDZ domains) with ADGRA3. Interacts with KCNF1. Interacts with CAMK2. Interacts with cytoskeleton-associated protein EPB41. Interacts with cytoskeleton-associated protein EZR. Found in a complex with KCNA5 and CAV3. Found in a complex with APC and CTNNB1. Interacts (via PDZ domains) with APC. Interacts with CDH1 through binding to PIK3R1. Forms multiprotein complexes with CASK, LIN7A, LIN7B, LIN7C, APBA1, and KCNJ12. Interacts with TOPK. Forms a tripartite complex composed of DLG1, MPP7 and LIN7 (LIN7A or LIN7C). May interact with TJAP1. Interacts with PTEN. Interacts with FRMPD4 (via C-terminus). Interacts with LRFN1, LRFN2 and LRFN4. Interacts with SFPQ. Interacts (via PDZ domains) with ADGRA2 (via PDZ-binding motif). Interacts with ADAM10; this interaction recruits ADAM10 to the cell membrane during long-term depression in hippocampal neurons. Interacts with DGKI (via PDZ-binding motif). Interacts (via PDZ domains) with MARCHF2 (via PDZ domain); the interaction leads to DLG1 ubiqtuitination and degradation. Interacts (via N-terminus) with MPP3; this interaction connects CADM1 with DLG1 and links CADM1 with the regulatory subunit of phosphoinositide-3-kinase (PI3K) by forming a multiprotein complex and participates in cell spreading. As to quaternary structure, (Microbial infection) Interacts with HTLV-1 protein Tax. (Microbial infection) Interacts (via PDZ domains 1 and 2) with influenza A virus protein NS1; the interaction results in the translocation of DLG1 from the cell membrane to perinuclear puncta. Acts as a scaffold protein to facilitate the interaction between LIN7C and influenza A virus protein NS1; the interaction facilitates translocation of LIN7C to cytoplasmic puncta. In terms of assembly, (Microbial infection) Interacts with human papillomavirus 18/HPV-18 protein E6. Post-translationally, phosphorylated by MAPK12. Phosphorylation of Ser-232 regulates association with GRIN2A. In terms of processing, ubiquitinated; by MARCHF2 which results in its degradation. As to expression, abundantly expressed in atrial myocardium (at protein level). Expressed in lung fibroblasts, cervical epithelial and B-cells (at protein level). Expressed in the brain (at protein level). Widely expressed, with isoforms displaying different expression profiles.

The protein localises to the cell membrane. It localises to the basolateral cell membrane. It is found in the endoplasmic reticulum membrane. Its subcellular location is the postsynaptic density. The protein resides in the synapse. The protein localises to the sarcolemma. It localises to the apical cell membrane. It is found in the cell junction. Its subcellular location is the cytoplasm. In terms of biological role, essential multidomain scaffolding protein required for normal development. Recruits channels, receptors and signaling molecules to discrete plasma membrane domains in polarized cells. Promotes epithelial cell layer barrier function via maintaining cell-cell adhesion. May also play a role in adherens junction assembly, signal transduction, cell proliferation, synaptogenesis and lymphocyte activation. Regulates the excitability of cardiac myocytes by modulating the functional expression of Kv4 channels. Functional regulator of Kv1.5 channel. During long-term depression in hippocampal neurons, it recruits ADAM10 to the plasma membrane. This Homo sapiens (Human) protein is Disks large homolog 1.